The primary structure comprises 325 residues: Tetraacyldisaccharide 4'-kinase (325 aa).

53 to 60 (SVGGNGKT) serves as a coordination point for ATP.

It belongs to the LpxK family.

It catalyses the reaction a lipid A disaccharide + ATP = a lipid IVA + ADP + H(+). The protein operates within glycolipid biosynthesis; lipid IV(A) biosynthesis; lipid IV(A) from (3R)-3-hydroxytetradecanoyl-[acyl-carrier-protein] and UDP-N-acetyl-alpha-D-glucosamine: step 6/6. Transfers the gamma-phosphate of ATP to the 4'-position of a tetraacyldisaccharide 1-phosphate intermediate (termed DS-1-P) to form tetraacyldisaccharide 1,4'-bis-phosphate (lipid IVA). The protein is Tetraacyldisaccharide 4'-kinase of Pasteurella multocida (strain Pm70).